The chain runs to 349 residues: Farnesyl pyrophosphate synthase (349 aa).

3 residues coordinate isopentenyl diphosphate: Lys-48, Arg-51, and Gln-90. Mg(2+) contacts are provided by Asp-97 and Asp-101. A dimethylallyl diphosphate-binding site is contributed by Arg-106. Arg-107 lines the isopentenyl diphosphate pocket. Dimethylallyl diphosphate is bound by residues Lys-194, Thr-195, Gln-234, Lys-251, and Lys-260.

Belongs to the FPP/GGPP synthase family. Mg(2+) serves as cofactor.

Its subcellular location is the cytoplasm. The enzyme catalyses isopentenyl diphosphate + dimethylallyl diphosphate = (2E)-geranyl diphosphate + diphosphate. The catalysed reaction is isopentenyl diphosphate + (2E)-geranyl diphosphate = (2E,6E)-farnesyl diphosphate + diphosphate. It functions in the pathway isoprenoid biosynthesis; farnesyl diphosphate biosynthesis; farnesyl diphosphate from geranyl diphosphate and isopentenyl diphosphate: step 1/1. The protein operates within isoprenoid biosynthesis; geranyl diphosphate biosynthesis; geranyl diphosphate from dimethylallyl diphosphate and isopentenyl diphosphate: step 1/1. Its function is as follows. Catalyzes the sequential condensation of isopentenyl pyrophosphate with the allylic pyrophosphates, dimethylallyl pyrophosphate, and then with the resultant geranylpyrophosphate to the ultimate product farnesyl pyrophosphate. This is Farnesyl pyrophosphate synthase (FPS1) from Kluyveromyces lactis (strain ATCC 8585 / CBS 2359 / DSM 70799 / NBRC 1267 / NRRL Y-1140 / WM37) (Yeast).